A 2345-amino-acid chain; its full sequence is Acetyl-CoA carboxylase 1 (2345 aa).

The residue at position 1 (Met-1) is an N-acetylmethionine. Ser-5, Ser-23, Ser-25, Ser-29, Ser-34, Ser-47, Ser-49, and Ser-52 each carry phosphoserine. Position 57 is a phosphothreonine (Thr-57). Phosphoserine is present on Ser-77. Ser-79 bears the Phosphoserine; by AMPK mark. Residues 116–617 (VIEKVLIANN…DTGWLDRLIA (502 aa)) form the Biotin carboxylation domain. In terms of domain architecture, ATP-grasp spans 274-465 (SKRILNVPQD…LPAAQLQIAM (192 aa)). 314 to 319 (GGGGKG) is an ATP binding site. The Mg(2+) site is built by Glu-423, Glu-436, and Asn-438. Positions 423, 436, and 438 each coordinate Mn(2+). Arg-440 is an active-site residue. Position 609 is a phosphothreonine (Thr-609). The region spanning 744–818 (FEKENDPSVM…DPGCVIAKMQ (75 aa)) is the Biotinyl-binding domain. Lys-785 is modified (N6-biotinyllysine). Position 834 is a phosphoserine (Ser-834). Phosphoserine; by AMPK; in vitro occurs at positions 1200 and 1215. Position 1217 is a phosphoserine (Ser-1217). Thr-1226 carries the phosphothreonine modification. A phosphoserine mark is found at Ser-1258, Ser-1262, and Ser-1272. Lys-1333 bears the N6-acetyllysine mark. A CoA carboxyltransferase N-terminal domain is found at 1575–1913 (PYVTKDLLQS…NVHSSVPLLN (339 aa)). Residues 1575–2233 (PYVTKDLLQS…EDLVKKKIHS (659 aa)) are carboxyltransferase. CoA-binding residues include Arg-1822, Lys-2126, and Arg-2128. Residues 1917 to 2233 (PIDRIIEFVP…EDLVKKKIHS (317 aa)) enclose the CoA carboxyltransferase C-terminal domain. Residue Thr-2152 is modified to Phosphothreonine.

Monomer, homodimer, and homotetramer. Can form filamentous polymers. Interacts in its inactive phosphorylated form with the BRCT domains of BRCA1 which prevents ACACA dephosphorylation and inhibits lipid synthesis. Interacts with MID1IP1; interaction with MID1IP1 promotes oligomerization and increases its activity. It depends on Mg(2+) as a cofactor. Requires Mn(2+) as cofactor. The cofactor is biotin. In terms of processing, the N-terminus is blocked. Post-translationally, phosphorylation on Ser-1262 is required for interaction with BRCA1. Phosphorylation at Ser-79 by AMPK inactivates enzyme activity. Phosphorylated in vitro at Ser-1200 and Ser-1215 by AMPK; the relevance of phosphorylation of these sites in vivo is however unclear. In terms of processing, the biotin cofactor is covalently attached to the central biotinyl-binding domain and is required for the catalytic activity.

The protein localises to the cytoplasm. The protein resides in the cytosol. The catalysed reaction is hydrogencarbonate + acetyl-CoA + ATP = malonyl-CoA + ADP + phosphate + H(+). Its pathway is lipid metabolism; malonyl-CoA biosynthesis; malonyl-CoA from acetyl-CoA: step 1/1. With respect to regulation, inhibited by phosphorylation. Citrate promotes oligomerization of the protein into filaments that correspond to the most active form of the carboxylase. Functionally, cytosolic enzyme that catalyzes the carboxylation of acetyl-CoA to malonyl-CoA, the first and rate-limiting step of de novo fatty acid biosynthesis. This is a 2 steps reaction starting with the ATP-dependent carboxylation of the biotin carried by the biotin carboxyl carrier (BCC) domain followed by the transfer of the carboxyl group from carboxylated biotin to acetyl-CoA. This chain is Acetyl-CoA carboxylase 1, found in Rattus norvegicus (Rat).